Reading from the N-terminus, the 199-residue chain is Recombination protein RecR (199 aa).

The C4-type zinc-finger motif lies at 57 to 72; it reads CPICGNITEKEVCDIC. Positions 80 to 176 constitute a Toprim domain; it reads TTIMVVEQPK…KVTRLAAGLS (97 aa).

It belongs to the RecR family.

In terms of biological role, may play a role in DNA repair. It seems to be involved in an RecBC-independent recombinational process of DNA repair. It may act with RecF and RecO. The chain is Recombination protein RecR from Lactobacillus helveticus (strain DPC 4571).